The primary structure comprises 185 residues: Threonylcarbamoyl-AMP synthase (185 aa).

A YrdC-like domain is found at 3–185; the sequence is EQAPDEVQEI…VDAISGKVLR (183 aa).

This sequence belongs to the SUA5 family. TsaC subfamily.

It localises to the cytoplasm. It carries out the reaction L-threonine + hydrogencarbonate + ATP = L-threonylcarbamoyladenylate + diphosphate + H2O. In terms of biological role, required for the formation of a threonylcarbamoyl group on adenosine at position 37 (t(6)A37) in tRNAs that read codons beginning with adenine. Catalyzes the conversion of L-threonine, HCO(3)(-)/CO(2) and ATP to give threonylcarbamoyl-AMP (TC-AMP) as the acyladenylate intermediate, with the release of diphosphate. The sequence is that of Threonylcarbamoyl-AMP synthase from Shewanella sediminis (strain HAW-EB3).